Reading from the N-terminus, the 321-residue chain is Probable 2-oxoglutarate-dependent dioxygenase AOP1.2 (321 aa).

In terms of domain architecture, Fe2OG dioxygenase spans 165–270 (TYYLTRLMKY…RYSTGLFSIP (106 aa)). His194, Asp196, and His251 together coordinate Fe cation. Arg261 is a 2-oxoglutarate binding site.

Belongs to the iron/ascorbate-dependent oxidoreductase family. Requires Fe(2+) as cofactor.

Functionally, probable 2-oxoglutarate-dependent dioxygenase that may be involved in glucosinolates biosynthesis. May play a role in the production of aliphatic glucosinolates. The protein is Probable 2-oxoglutarate-dependent dioxygenase AOP1.2 (AOP1.2) of Arabidopsis thaliana (Mouse-ear cress).